The following is a 484-amino-acid chain: GTPase Obg (484 aa).

The Obg domain maps to 7 to 164 (PRFVDRVVIH…RDLTLELKTV (158 aa)). The segment at 21 to 43 (SGGNGCASVHREKFKPLGGPDGG) is disordered. Positions 165-345 (ADVGLVGFPS…LIFGLSQMIS (181 aa)) constitute an OBG-type G domain. Residues 171 to 178 (GFPSAGKS), 196 to 200 (FTTLV), 217 to 220 (DVPG), 297 to 300 (NKID), and 326 to 328 (STA) contribute to the GTP site. Mg(2+) contacts are provided by S178 and T198. An OCT domain is found at 363 to 441 (PIPVDDSGFT…IGEMTFDWEP (79 aa)). The interval 439-484 (WEPQTPAGEPVAMSGRGTDPRLDSNKRVGAAERKAARSRRREHGDG) is disordered. Over residues 456 to 473 (TDPRLDSNKRVGAAERKA) the composition is skewed to basic and acidic residues. Over residues 474 to 484 (ARSRRREHGDG) the composition is skewed to basic residues.

This sequence belongs to the TRAFAC class OBG-HflX-like GTPase superfamily. OBG GTPase family. Monomer. The cofactor is Mg(2+).

It localises to the cytoplasm. Functionally, an essential GTPase which binds GTP, GDP and possibly (p)ppGpp with moderate affinity, with high nucleotide exchange rates and a fairly low GTP hydrolysis rate. Plays a role in control of the cell cycle, stress response, ribosome biogenesis and in those bacteria that undergo differentiation, in morphogenesis control. The polypeptide is GTPase Obg (Mycobacterium tuberculosis (strain CDC 1551 / Oshkosh)).